Here is an 856-residue protein sequence, read N- to C-terminus: Envelope glycoprotein gp150 (856 aa).

The Extracellular segment spans residues 1-785; it reads MAEGFVANGQ…WIGNIPQYLK (785 aa). N-linked (GlcNAc...) asparagine; by host glycosylation is found at Asn220, Asn258, Asn269, Asn274, Asn298, Asn330, Asn336, Asn342, Asn418, Asn422, Asn448, Asn469, Asn481, Asn499, Asn518, Asn531, Asn548, Asn551, and Asn556. Residues 616–636 form a fusion peptide region; the sequence is VMLALATVLSMAGAGTGATAI. A coiled-coil region spans residues 643–693; it reads HQVLATQQEAIEKVTEALKITNLRLVTLEHQVLVIGLKVEAMEKFLYTAFA. The tract at residues 662-680 is immunosuppression; sequence ITNLRLVTLEHQVLVIGLK. Asn717, Asn721, Asn729, and Asn737 each carry an N-linked (GlcNAc...) asparagine; by host glycan. Residues 736 to 772 adopt a coiled-coil conformation; sequence YNQTKDLQKKFYGIIMDIEQNNVQGKKGLQQLQKWED. The helical transmembrane segment at 786-806 threads the bilayer; that stretch reads GLLGSIVGIGLGILLLILCLP. Residues 807 to 856 lie on the Cytoplasmic side of the membrane; that stretch reads TLVDCIRNCIHKILGYTVIAMPEVDGEEIQPQMELRRNGRQCGMSEKEEE.

The mature envelope protein (Env) consists of a trimer of SU-TM heterodimers attached by noncovalent interactions or by a labile interchain disulfide bond. In terms of processing, specific enzymatic cleavages in vivo yield mature proteins. Envelope glycoproteins are synthesized as an inactive precursor that is N-glycosylated and processed likely by host cell furin or by a furin-like protease in the Golgi to yield the mature SU and TM proteins. The cleavage site between SU and TM requires the minimal sequence [KR]-X-[KR]-R.

It localises to the virion membrane. The protein localises to the host cell membrane. In terms of biological role, the surface protein (SU) attaches the virus to the host cell by binding to its receptor. This interaction triggers the refolding of the transmembrane protein (TM) and is thought to activate its fusogenic potential by unmasking its fusion peptide. Fusion occurs at the host cell plasma membrane. Its function is as follows. The transmembrane protein (TM) acts as a class I viral fusion protein. Under the current model, the protein has at least 3 conformational states: pre-fusion native state, pre-hairpin intermediate state, and post-fusion hairpin state. During viral and target cell membrane fusion, the coiled coil regions (heptad repeats) assume a trimer-of-hairpins structure, positioning the fusion peptide in close proximity to the C-terminal region of the ectodomain. The formation of this structure appears to drive apposition and subsequent fusion of viral and target cell membranes. Membranes fusion leads to delivery of the nucleocapsid into the cytoplasm. This is Envelope glycoprotein gp150 (env) from Feline immunodeficiency virus (strain UT-113) (FIV).